The chain runs to 325 residues: Histone-lysine N-methyltransferase ATXR4 (325 aa).

Positions 1-30 are cleaved as a signal peptide; the sequence is MSRLALNRYSRCFSRLKTLTTPLFFSSSAA. Residues 42–295 enclose the SET domain; it reads PPIRVGLTES…EGEELRICYI (254 aa).

This sequence belongs to the class V-like SAM-binding methyltransferase superfamily. Histone-lysine methyltransferase family. TRX/MLL subfamily.

It localises to the nucleus. The enzyme catalyses L-lysyl-[histone] + S-adenosyl-L-methionine = N(6)-methyl-L-lysyl-[histone] + S-adenosyl-L-homocysteine + H(+). In terms of biological role, histone methyltransferase. In Arabidopsis thaliana (Mouse-ear cress), this protein is Histone-lysine N-methyltransferase ATXR4 (ATXR4).